The chain runs to 309 residues: Ferredoxin--NADP reductase (309 aa).

Residues aspartate 25, glutamine 33, tyrosine 38, valine 77, phenylalanine 107, aspartate 267, and threonine 307 each coordinate FAD.

Belongs to the ferredoxin--NADP reductase type 2 family. Homodimer. Requires FAD as cofactor.

It catalyses the reaction 2 reduced [2Fe-2S]-[ferredoxin] + NADP(+) + H(+) = 2 oxidized [2Fe-2S]-[ferredoxin] + NADPH. The sequence is that of Ferredoxin--NADP reductase from Lactobacillus acidophilus (strain ATCC 700396 / NCK56 / N2 / NCFM).